The sequence spans 81 residues: Large ribosomal subunit protein bL27 (81 aa).

The span at methionine 1–lysine 11 shows a compositional bias: polar residues. The interval methionine 1–leucine 21 is disordered.

The protein belongs to the bacterial ribosomal protein bL27 family.

This is Large ribosomal subunit protein bL27 from Borrelia hermsii (strain HS1 / DAH).